The sequence spans 62 residues: Large ribosomal subunit protein uL30 (62 aa).

The protein belongs to the universal ribosomal protein uL30 family. Part of the 50S ribosomal subunit.

The sequence is that of Large ribosomal subunit protein uL30 from Marinobacter nauticus (strain ATCC 700491 / DSM 11845 / VT8) (Marinobacter aquaeolei).